The chain runs to 212 residues: Peptide methionine sulfoxide reductase MsrA (212 aa).

Residue cysteine 52 is part of the active site.

Belongs to the MsrA Met sulfoxide reductase family.

The catalysed reaction is L-methionyl-[protein] + [thioredoxin]-disulfide + H2O = L-methionyl-(S)-S-oxide-[protein] + [thioredoxin]-dithiol. It carries out the reaction [thioredoxin]-disulfide + L-methionine + H2O = L-methionine (S)-S-oxide + [thioredoxin]-dithiol. Has an important function as a repair enzyme for proteins that have been inactivated by oxidation. Catalyzes the reversible oxidation-reduction of methionine sulfoxide in proteins to methionine. This chain is Peptide methionine sulfoxide reductase MsrA, found in Shigella boydii serotype 4 (strain Sb227).